The sequence spans 605 residues: MANDKGSNWDSGLGCSYLLTEAECESDKENEEPGAGVELSVESDRYDSQDEDFVDNASVFQGNHLEVFQALEKKAGEEQILNLKRKVLGSSQNSSGSEASETPVKRRKSGAKRRLFAENEANRVLTPLQVQGEGEGRQELNEEQAISHLHLQLVKSKNATVFKLGLFKSLFLCSFHDITRLFKNDKTTNQQWVLAVFGLAEVFFEASFELLKKQCSFLQMQKRSHEGGTCAVYLICFNTAKSRETVRNLMANTLNVREECLMLQPAKIRGLSAALFWFKSSLSPATLKHGALPEWIRAQTTLNESLQTEKFDFGTMVQWAYDHKYAEESKIAYEYALAAGSDSNARAFLATNSQAKHVKDCATMVRHYLRAETQALSMPAYIKARCKLATGEGSWKSILTFFNYQNIELITFINALKLWLKGIPKKNCLAFIGPPNTGKSMLCNSLIHFLGGSVLSFANHKSHFWLASLADTRAALVDDATHACWRYFDTYLRNALDGYPVSIDRKHKAAVQIKAPPLLVTSNIDVQAEDRYLYLHSRVQTFRFEQPCTDESGEQPFNITDADWKSFFVRLWGRLDLIDEEEDSEEDGDSMRTFTCSARNTNAVD.

Positions 84 to 86 (KRK) match the Nuclear localization signal motif. Ser90 and Ser94 each carry phosphoserine; by host. Positions 90–101 (SSQNSSGSEASE) are enriched in low complexity. Residues 90-112 (SSQNSSGSEASETPVKRRKSGAK) form a disordered region. Phosphothreonine; by host CDK1 is present on Thr102. The Nuclear localization signal signature appears at 105-108 (KRRK). Phosphoserine; by host is present on Ser109. The tract at residues 142–308 (EEQAISHLHL…QTTLNESLQT (167 aa)) is DNA-binding region. An SF3 helicase domain is found at 407–557 (IELITFINAL…CTDESGEQPF (151 aa)). Position 433–440 (433–440 (GPPNTGKS)) interacts with ATP. Lys514 participates in a covalent cross-link: Glycyl lysine isopeptide (Lys-Gly) (interchain with G-Cter in SUMO). The disordered stretch occupies residues 582–605 (EDSEEDGDSMRTFTCSARNTNAVD). The span at 592–605 (RTFTCSARNTNAVD) shows a compositional bias: polar residues.

This sequence belongs to the papillomaviridae E1 protein family. In terms of assembly, can form hexamers. Interacts with E2 protein; this interaction increases E1 DNA binding specificity. Interacts with host DNA polymerase subunit POLA2. Interacts with host single stranded DNA-binding protein RPA1. Interacts with host TOP1; this interaction stimulates the enzymatic activity of TOP1. Post-translationally, phosphorylated. Probably phosphorylated by host PKA and PKC at Ser-109. Phosphorylated by host CDK1 at Thr-102. In terms of processing, phosphorylated. Sumoylated.

It is found in the host nucleus. The catalysed reaction is Couples ATP hydrolysis with the unwinding of duplex DNA by translocating in the 3'-5' direction.. It catalyses the reaction ATP + H2O = ADP + phosphate + H(+). ATP-dependent DNA 3'-5' helicase required for initiation of viral DNA replication. It forms a complex with the viral E2 protein. The E1-E2 complex binds to the replication origin which contains binding sites for both proteins. During the initial step, a dimer of E1 interacts with a dimer of protein E2 leading to a complex that binds the viral origin of replication with high specificity. Then, a second dimer of E1 displaces the E2 dimer in an ATP-dependent manner to form the E1 tetramer. Following this, two E1 monomers are added to each half of the site, which results in the formation of two E1 trimers on the viral ori. Subsequently, two hexamers will be created. The double hexamer acts as a bi-directional helicase machinery and unwinds the viral DNA and then recruits the host DNA polymerase to start replication. This chain is Replication protein E1, found in Bovine papillomavirus type 1.